A 178-amino-acid polypeptide reads, in one-letter code: Large ribosomal subunit protein uL6 (178 aa).

Belongs to the universal ribosomal protein uL6 family. Part of the 50S ribosomal subunit.

Functionally, this protein binds to the 23S rRNA, and is important in its secondary structure. It is located near the subunit interface in the base of the L7/L12 stalk, and near the tRNA binding site of the peptidyltransferase center. This is Large ribosomal subunit protein uL6 from Wolinella succinogenes (strain ATCC 29543 / DSM 1740 / CCUG 13145 / JCM 31913 / LMG 7466 / NCTC 11488 / FDC 602W) (Vibrio succinogenes).